Reading from the N-terminus, the 335-residue chain is Glyceraldehyde-3-phosphate dehydrogenase 1 (335 aa).

Residues threonine 13–isoleucine 14 and glycine 111 each bind NAD(+). Serine 140 to asparagine 142 serves as a coordination point for D-glyceraldehyde 3-phosphate. Cysteine 141 functions as the Nucleophile in the catalytic mechanism. An NAD(+)-binding site is contributed by arginine 169. D-glyceraldehyde 3-phosphate-binding positions include threonine 171 and histidine 195 to glycine 196. NAD(+) is bound at residue glutamine 300.

The protein belongs to the glyceraldehyde-3-phosphate dehydrogenase family. Homotetramer.

The protein resides in the cytoplasm. It carries out the reaction D-glyceraldehyde 3-phosphate + phosphate + NADP(+) = (2R)-3-phospho-glyceroyl phosphate + NADPH + H(+). The catalysed reaction is D-glyceraldehyde 3-phosphate + phosphate + NAD(+) = (2R)-3-phospho-glyceroyl phosphate + NADH + H(+). The protein operates within carbohydrate degradation; glycolysis; pyruvate from D-glyceraldehyde 3-phosphate: step 1/5. The protein is Glyceraldehyde-3-phosphate dehydrogenase 1 (gapA) of Methanosarcina acetivorans (strain ATCC 35395 / DSM 2834 / JCM 12185 / C2A).